The chain runs to 509 residues: Methylmalonyl-CoA decarboxylase subunit alpha (509 aa).

In terms of domain architecture, CoA carboxyltransferase N-terminal spans 4-260 (VQEKIELLHE…NNMEDAPLVD (257 aa)). Residues 267–503 (REDESLNSLL…SKRENRAPKK (237 aa)) enclose the CoA carboxyltransferase C-terminal domain.

This sequence belongs to the AccD/PCCB family. As to quaternary structure, the methylmalonyl-CoA decarboxylase is composed of five subunits: the carboxyltransferase alpha subunit (MmdA), the tunnel beta subunit (MmdB), the biotin-containing gamma subunit (MmdC), and the delta (MmdD) and epsilon (MmdE) subunits. Interacts with the gamma subunit.

It localises to the cell membrane. The enzyme catalyses (S)-methylmalonyl-CoA + Na(+)(in) + H(+)(out) = propanoyl-CoA + Na(+)(out) + CO2. Its activity is regulated as follows. Completely inhibited by avidin. Its function is as follows. Carboxyltransferase subunit of the sodium ion pump methylmalonyl-CoA decarboxylase, which converts the chemical energy of a decarboxylation reaction into an electrochemical gradient of Na(+) ions across the cytoplasmic membrane, thereby creating a sodium ion motive force that is used for ATP synthesis. The alpha subunit catalyzes the Na(+)-independent carboxyltransfer from methylmalonyl-CoA to the prosthetic biotin group located on the gamma subunit. Can also convert malonyl-CoA into acetyl-CoA. In Veillonella parvula (Staphylococcus parvulus), this protein is Methylmalonyl-CoA decarboxylase subunit alpha.